A 147-amino-acid polypeptide reads, in one-letter code: Cyanate hydratase (147 aa).

Catalysis depends on residues R88, E91, and S114.

It belongs to the cyanase family.

The enzyme catalyses cyanate + hydrogencarbonate + 3 H(+) = NH4(+) + 2 CO2. Catalyzes the reaction of cyanate with bicarbonate to produce ammonia and carbon dioxide. The protein is Cyanate hydratase of Parasynechococcus marenigrum (strain WH8102).